The following is a 192-amino-acid chain: Small ribosomal subunit protein eS7 (192 aa).

Belongs to the eukaryotic ribosomal protein eS7 family.

The polypeptide is Small ribosomal subunit protein eS7 (RpS7) (Culex quinquefasciatus (Southern house mosquito)).